We begin with the raw amino-acid sequence, 149 residues long: Ribosome maturation factor RimP (149 aa).

The protein belongs to the RimP family.

The protein localises to the cytoplasm. In terms of biological role, required for maturation of 30S ribosomal subunits. The chain is Ribosome maturation factor RimP from Sulfurimonas denitrificans (strain ATCC 33889 / DSM 1251) (Thiomicrospira denitrificans (strain ATCC 33889 / DSM 1251)).